We begin with the raw amino-acid sequence, 132 residues long: uncharacterized protein (132 aa).

4 helical membrane-spanning segments follow: residues 7–29 (LALLSFFLGLGSFFSFYVAPTLF), 44–62 (VFPVYFGLGIILVGISLFL), 69–88 (LFLSLGILNLLLLLLQEFIV), and 108–130 (GVSMGINLAILLLTLGKVLILIF).

The protein localises to the cell membrane. This is an uncharacterized protein from Aquifex aeolicus (strain VF5).